Consider the following 29-residue polypeptide: Cyclotide cter-L (29 aa).

A cross-link (cyclopeptide (His-Asp)) is located at residues 1–29; that stretch reads HEPCGESCVFIPCITTVVGCSCKNKVCYD. 3 disulfide bridges follow: C4/C20, C8/C22, and C13/C27.

In terms of processing, contains 3 disulfide bonds. Post-translationally, this is a cyclic peptide.

In terms of biological role, probably participates in a plant defense mechanism. This chain is Cyclotide cter-L, found in Clitoria ternatea (Butterfly pea).